Reading from the N-terminus, the 1467-residue chain is Neuropathy target esterase sws (1467 aa).

Over 1–34 the chain is Lumenal; sequence MDVLEMLRASASGSYNTIFSDAWCQYVSKQITAT. Residues 35-55 form a helical membrane-spanning segment; sequence MYMYCAFGLMGVLFLAWFMYF. Residues 56-1467 lie on the Cytoplasmic side of the membrane; it reads KRLARLRLRD…RSSTYNETKN (1412 aa). 174 to 301 lines the a nucleoside 3',5'-cyclic phosphate pocket; sequence IFGHFEKPIF…IRVIQVIMIR (128 aa). Disordered regions lie at residues 332–353 and 372–416; these read TMSG…ANGP and MGMG…SVHG. Positions 339–350 are enriched in low complexity; that stretch reads SQTSQSSRQATA. A phosphoserine mark is found at S450 and S459. A nucleoside 3',5'-cyclic phosphate is bound by residues 488–615 and 604–731; these read ELGL…VVRR and IVLD…LSHR. The PNPLA domain occupies 958–1124; the sequence is LVLGGGGARG…VNNLPGHLWR (167 aa). A GXGXXG motif is present at residues 962-967; it reads GGGARG. The GXSXG signature appears at 989–993; that stretch reads GVSIG. S991 (nucleophile) is an active-site residue. D1111 acts as the Proton acceptor in catalysis. A DGA/G motif is present at residues 1111–1113; the sequence is DGG. S1205 carries the phosphoserine modification. Residues 1377–1467 are disordered; that stretch reads RKMDKSTQST…RSSTYNETKN (91 aa). Polar residues predominate over residues 1382-1393; it reads STQSTPPTSSRA. 2 stretches are compositionally biased toward basic and acidic residues: residues 1396–1406 and 1448–1458; these read RGKEEARHMDN and LADKDEDKENR.

It belongs to the NTE family. Interacts with Pka-C3; interaction inhibits the catalytic function of Pka-C3 and the esterase activity of sws.

It is found in the endoplasmic reticulum membrane. The enzyme catalyses a 1-acyl-sn-glycero-3-phosphocholine + H2O = sn-glycerol 3-phosphocholine + a fatty acid + H(+). Phospholipase B that deacylates intracellular phosphatidylcholine (PtdCho), generating glycerophosphocholine (GroPtdCho). This deacylation occurs at both sn-2 and sn-1 positions of PtdCho. Its specific chemical modification by certain organophosphorus (OP) compounds leads to distal axonopathy. Plays a role in the signaling mechanism between neurons and glia that regulates glia wrapping during development of the adult brain. Essential for membrane lipid homeostasis and cell survival in both neurons and glia of the adult brain. The sequence is that of Neuropathy target esterase sws from Drosophila yakuba (Fruit fly).